A 518-amino-acid chain; its full sequence is Glutamate--cysteine ligase (518 aa).

It belongs to the glutamate--cysteine ligase type 1 family. Type 1 subfamily.

It carries out the reaction L-cysteine + L-glutamate + ATP = gamma-L-glutamyl-L-cysteine + ADP + phosphate + H(+). Its pathway is sulfur metabolism; glutathione biosynthesis; glutathione from L-cysteine and L-glutamate: step 1/2. The sequence is that of Glutamate--cysteine ligase from Shigella boydii serotype 4 (strain Sb227).